The chain runs to 1367 residues: MTHRRTAQGRRPRWLLSIISALLSAVLQTRAATGSASQVHLDLTVLIGVPLPSSVSFTTGYGGFPAYSFGPGANVGRPARTLIPPTFFRDFAIGVAVKPNSAQGGVLFAITDAFQKVIYLGLRLSSVEDGRQRVILYYTEPGSHVSREAAVFSVPVMTNRWNRFAVTVQGEEVALFMDCEEQSQVRFQRSSWPLTFEPSAGIFVGNAGAMGLERFTGSIQQLTIYSDPRTPEELCEAQESSASGEASGFQEMDEVAEIMEAVTYTQAPPKESHVDPISVPPTSSSPAEDSELSGEPVPEGTPETNLSIIGHSSPEQGSGEILNDTLEVHAMDGDPGTDDGSGDGALLNVTDGQGLSATATGEASVPVTTVLEAENGSMPTGSPTLAMFTQSIREVDTPDPENLTTTASGDGEVPTSTDGDTEADSSPTGGPTLKPREEATLGSHGEEWLTPAVSKMPLKAFEEEEASGTAIDSLDVIFTPTVVLEQVSRRPTDIQATFTPTVVLEETSGAPTDTQDALTPTVAPEQMFTAEPTDGGDLVASTEEAEEEGSGSMPPSGPPLPTPTVTPKRQVTLVGVEAEGSGPVGGLDEGSGSGDIVGNEDLLRGPPGPPGPPGSPGIPGKPGTDVFMGPPGSPGEDGAPGEPGPQGPEGQPGLDGASGQQGMKGEKGARGPNGSAGEKGDPGNRGLPGPPGKNGEVGTPGVMGPPGPPGPPGPPGPGCTTELGFEIEGSGDVRLLSKPTISGPTSPSGPKGEKGEQGAKGERGADGTSTMGPPGPRGPPGHVEVLSSSLINITNGSMNFSDIPELMGPPGPDGVPGLPGFPGPRGPKGDTGVPGFPGLKGEQGEKGEPGAILTGDVPLEMMKGRKGEPGIHGAPGPMGPKGPPGHKGEFGLPGRPGRPGLNGLKGAKGDRGVTLPGPPGLPGPPGPPGPPGAVVNIKGAVFPIPARPHCKTPVGTAHPGDPELVTFHGVKGEKGSWGLPGSKGEKGDQGAQGPPGPPVDPAYLRHFLNSLKGENEDASFRGESSNNLFVSGPPGLPGYPGLVGQKGEAVVGPQGPPGIPGLPGPPGFGRPGVPGPPGPPGPPGPPAILGAAVALPGPPGPPGQPGLPGSRNLVTALSDMGDMLQKAHLVIEGTFIYLRDSGEFFIRVRDGWKKLQLGELIPIPADSPPPPALSSNPYQPQPPLNPILSANYERPVLHLVALNTPVAGDIRADFQCFQQARAAGLLSTFRAFLSSHLQDLSTVVRKAERFGLPIVNLKGQVLFNNWDSIFSGDGGQFNTHIPIYSFDGRDVMTDPSWPQKVVWHGSNPHGVRLVDKYCEAWRTTDMAVTGFASPLSTGKILDQKAYSCANRLIVLCIENSFMTDTRK.

The signal sequence occupies residues 1–31 (MTHRRTAQGRRPRWLLSIISALLSAVLQTRA). The Laminin G-like domain maps to 54-249 (SVSFTTGYGG…SSASGEASGF (196 aa)). A nonhelical region 1 (NC1) region spans residues 229–604 (RTPEELCEAQ…DIVGNEDLLR (376 aa)). O-linked (Xyl...) (chondroitin sulfate) serine glycans are attached at residues serine 243 and serine 247. Residues 267-319 (APPKESHVDPISVPPTSSSPAEDSELSGEPVPEGTPETNLSIIGHSSPEQGSG) form a disordered region. 2 N-linked (GlcNAc...) asparagine glycosylation sites follow: asparagine 305 and asparagine 323. Serine 341 is a glycosylation site (O-linked (Xyl...) (chondroitin sulfate) serine). N-linked (GlcNAc...) asparagine glycans are attached at residues asparagine 348, asparagine 375, and asparagine 402. Disordered stretches follow at residues 396 to 446 (DTPD…SHGE) and 529 to 784 (TAEP…GHVE). Residues 402–429 (NLTTTASGDGEVPTSTDGDTEADSSPTG) are compositionally biased toward polar residues. Residues 434–446 (KPREEATLGSHGE) are compositionally biased toward basic and acidic residues. Pro residues predominate over residues 555–564 (PSGPPLPTPT). The segment covering 582–595 (GPVGGLDEGSGSGD) has biased composition (gly residues). Collagen-like domains lie at 605–665 (GPPG…GMKG) and 666–717 (EKGA…PPGP). The interval 605 to 718 (GPPGPPGPPG…PGPPGPPGPG (114 aa)) is triple-helical region 1 (COL1). Pro residues predominate over residues 606–616 (PPGPPGPPGSP). Residue asparagine 673 is glycosylated (N-linked (GlcNAc...) asparagine). Residues 703-717 (MGPPGPPGPPGPPGP) are compositionally biased toward pro residues. A nonhelical region 2 (NC2) region spans residues 719 to 748 (CTTELGFEIEGSGDVRLLSKPTISGPTSPS). Serine 730 is a glycosylation site (O-linked (Xyl...) (chondroitin sulfate) serine). Over residues 737–750 (SKPTISGPTSPSGP) the composition is skewed to low complexity. The tract at residues 749–783 (GPKGEKGEQGAKGERGADGTSTMGPPGPRGPPGHV) is triple-helical region 2 (COL2). Residues 751–765 (KGEKGEQGAKGERGA) are compositionally biased toward basic and acidic residues. The segment at 784 to 807 (EVLSSSLINITNGSMNFSDIPELM) is nonhelical region 3 (NC3). Residues asparagine 792, asparagine 795, and asparagine 799 are each glycosylated (N-linked (GlcNAc...) asparagine). Collagen-like domains are found at residues 808 to 850 (GPPG…GEPG) and 863 to 912 (KGRK…GDRG). The triple-helical region 3 (COL3) stretch occupies residues 808-852 (GPPGPDGVPGLPGFPGPRGPKGDTGVPGFPGLKGEQGEKGEPGAI). The nonhelical region 4 (NC4) stretch occupies residues 853-863 (LTGDVPLEMMK). Residues 864–934 (GRKGEPGIHG…PGPPGPPGAV (71 aa)) are triple-helical region 4 (COL4). Positions 905 to 930 (KGAKGDRGVTLPGPPGLPGPPGPPGP) are disordered. The segment covering 916-930 (PGPPGLPGPPGPPGP) has biased composition (pro residues). The tract at residues 935–968 (VNIKGAVFPIPARPHCKTPVGTAHPGDPELVTFH) is nonhelical region 5 (NC5). The tract at residues 969–998 (GVKGEKGSWGLPGSKGEKGDQGAQGPPGPP) is triple-helical region 5 (COL5). Disordered stretches follow at residues 974-1000 (KGSWGLPGSKGEKGDQGAQGPPGPPVD) and 1055-1089 (GPPGIPGLPGPPGFGRPGVPGPPGPPGPPGPPAIL). The interval 999 to 1031 (VDPAYLRHFLNSLKGENEDASFRGESSNNLFVS) is nonhelical region 6 (NC6). Residues 1032 to 1086 (GPPGLPGYPGLVGQKGEAVVGPQGPPGIPGLPGPPGFGRPGVPGPPGPPGPPGPP) are triple-helical region 6 (COL6). Pro residues predominate over residues 1055–1086 (GPPGIPGLPGPPGFGRPGVPGPPGPPGPPGPP). Positions 1087–1096 (AILGAAVALP) are nonhelical region 7 (NC7). The interval 1097-1111 (GPPGPPGQPGLPGSR) is triple-helical region 7 (COL7). Residues 1112–1367 (NLVTALSDMG…ENSFMTDTRK (256 aa)) are nonhelical region 8 (NC8). Disulfide bonds link cysteine 1216/cysteine 1356 and cysteine 1318/cysteine 1348.

It belongs to the multiplexin collagen family. Trimer; disulfide-linked. In terms of assembly, interacts moderately with EFEMP2. In terms of processing, prolines at the third position of the tripeptide repeating unit (G-X-Y) are hydroxylated in some or all of the chains. O-glycosylated; contains chondroitin sulfate. Detected in testis, brain, heart, kidney, skeletal muscle and skin (at protein level). Detected in heart and skeletal muscle.

Its subcellular location is the secreted. The protein localises to the extracellular space. It is found in the extracellular matrix. In terms of biological role, structural protein that stabilizes microvessels and muscle cells, both in heart and in skeletal muscle. Restin potently inhibits angiogenesis. This chain is Collagen alpha-1(XV) chain (Col15a1), found in Mus musculus (Mouse).